A 101-amino-acid chain; its full sequence is Small ribosomal subunit protein uS14 (101 aa).

Belongs to the universal ribosomal protein uS14 family. Part of the 30S ribosomal subunit. Contacts proteins S3 and S10.

Binds 16S rRNA, required for the assembly of 30S particles and may also be responsible for determining the conformation of the 16S rRNA at the A site. This is Small ribosomal subunit protein uS14 from Stenotrophomonas maltophilia (strain K279a).